A 258-amino-acid chain; its full sequence is 1-(5-phosphoribosyl)-5-[(5-phosphoribosylamino)methylideneamino] imidazole-4-carboxamide isomerase (258 aa).

Asp9 functions as the Proton acceptor in the catalytic mechanism. The active-site Proton donor is Asp131.

This sequence belongs to the HisA/HisF family.

It localises to the cytoplasm. The enzyme catalyses 1-(5-phospho-beta-D-ribosyl)-5-[(5-phospho-beta-D-ribosylamino)methylideneamino]imidazole-4-carboxamide = 5-[(5-phospho-1-deoxy-D-ribulos-1-ylimino)methylamino]-1-(5-phospho-beta-D-ribosyl)imidazole-4-carboxamide. Its pathway is amino-acid biosynthesis; L-histidine biosynthesis; L-histidine from 5-phospho-alpha-D-ribose 1-diphosphate: step 4/9. The sequence is that of 1-(5-phosphoribosyl)-5-[(5-phosphoribosylamino)methylideneamino] imidazole-4-carboxamide isomerase from Salinibacter ruber (strain DSM 13855 / M31).